The following is a 353-amino-acid chain: Photosystem II D2 protein (353 aa).

T2 bears the N-acetylthreonine mark. Phosphothreonine is present on T2. The helical transmembrane segment at 41-61 threads the bilayer; it reads CAYFALGGWFTGTTFVTSWYT. Chlorophyll a is bound at residue H118. A helical transmembrane segment spans residues 125–141; that stretch reads GFMLRQFELARSVQLRP. Q130 and N143 together coordinate pheophytin a. A helical membrane pass occupies residues 153–166; the sequence is VFVSVFLIYPLGQS. Position 198 (H198) interacts with chlorophyll a. The chain crosses the membrane as a helical span at residues 208 to 228; it reads AALLCAIHGATVENTLFEDGD. Residues H215 and F262 each coordinate a plastoquinone. Residue H215 participates in Fe cation binding. H269 provides a ligand contact to Fe cation. The chain crosses the membrane as a helical span at residues 279–295; the sequence is GLWMSAIGVVGLALNLR.

Belongs to the reaction center PufL/M/PsbA/D family. As to quaternary structure, PSII is composed of 1 copy each of membrane proteins PsbA, PsbB, PsbC, PsbD, PsbE, PsbF, PsbH, PsbI, PsbJ, PsbK, PsbL, PsbM, PsbT, PsbX, PsbY, PsbZ, Psb30/Ycf12, at least 3 peripheral proteins of the oxygen-evolving complex and a large number of cofactors. It forms dimeric complexes. The D1/D2 heterodimer binds P680, chlorophylls that are the primary electron donor of PSII, and subsequent electron acceptors. It shares a non-heme iron and each subunit binds pheophytin, quinone, additional chlorophylls, carotenoids and lipids. There is also a Cl(-1) ion associated with D1 and D2, which is required for oxygen evolution. The PSII complex binds additional chlorophylls, carotenoids and specific lipids. serves as cofactor.

It localises to the plastid. The protein localises to the chloroplast thylakoid membrane. It carries out the reaction 2 a plastoquinone + 4 hnu + 2 H2O = 2 a plastoquinol + O2. In terms of biological role, photosystem II (PSII) is a light-driven water:plastoquinone oxidoreductase that uses light energy to abstract electrons from H(2)O, generating O(2) and a proton gradient subsequently used for ATP formation. It consists of a core antenna complex that captures photons, and an electron transfer chain that converts photonic excitation into a charge separation. The D1/D2 (PsbA/PsbD) reaction center heterodimer binds P680, the primary electron donor of PSII as well as several subsequent electron acceptors. D2 is needed for assembly of a stable PSII complex. The polypeptide is Photosystem II D2 protein (Liriodendron tulipifera (Tuliptree)).